A 211-amino-acid chain; its full sequence is Small ribosomal subunit protein uS3 (211 aa).

A KH type-2 domain is found at 38 to 106 (LRKFIKKAFY…NIELNIIEVK (69 aa)).

It belongs to the universal ribosomal protein uS3 family. As to quaternary structure, part of the 30S ribosomal subunit. Forms a tight complex with proteins S10 and S14.

Its function is as follows. Binds the lower part of the 30S subunit head. Binds mRNA in the 70S ribosome, positioning it for translation. This is Small ribosomal subunit protein uS3 from Ehrlichia ruminantium (strain Welgevonden).